Consider the following 128-residue polypeptide: Large ribosomal subunit protein bL12 (128 aa).

It belongs to the bacterial ribosomal protein bL12 family. Homodimer. Part of the ribosomal stalk of the 50S ribosomal subunit. Forms a multimeric L10(L12)X complex, where L10 forms an elongated spine to which 2 to 4 L12 dimers bind in a sequential fashion. Binds GTP-bound translation factors.

Forms part of the ribosomal stalk which helps the ribosome interact with GTP-bound translation factors. Is thus essential for accurate translation. The sequence is that of Large ribosomal subunit protein bL12 from Corynebacterium glutamicum (strain R).